Consider the following 364-residue polypeptide: N-alpha-acetyltransferase 30 (364 aa).

The segment covering 1-18 (MAEVPPGPSSLLPPPAPA) has biased composition (pro residues). 3 disordered regions span residues 1–21 (MAEV…AAPA), 39–65 (SEDE…TSAK), and 110–164 (EAAA…SDPA). A phosphoserine mark is found at S39 and S54. Over residues 39–48 (SEDEEDDEEH) the composition is skewed to acidic residues. Residues 126-135 (AEGHPGERPP) show a composition bias toward basic and acidic residues. Positions 152 to 164 (AAAAAAGAASDPA) are enriched in low complexity. 3 positions are modified to phosphoserine: S192, S198, and S201. The region spanning 216–364 (RYVRYESELQ…DALRLKLWLR (149 aa)) is the N-acetyltransferase domain. Residue K235 is modified to N6-acetyllysine.

It belongs to the acetyltransferase family. MAK3 subfamily. Component of the N-terminal acetyltransferase C (NatC) complex, which is composed of NAA35, NAA38 and NAA30.

It localises to the cytoplasm. It is found in the nucleus. It catalyses the reaction N-terminal L-methionyl-L-leucyl-[protein] + acetyl-CoA = N-terminal N(alpha)-acetyl-L-methionyl-L-leucyl-[protein] + CoA + H(+). The enzyme catalyses N-terminal L-methionyl-L-isoleucyl-[protein] + acetyl-CoA = N-terminal N(alpha)-acetyl-L-methionyl-L-isoleucyl-[protein] + CoA + H(+). The catalysed reaction is N-terminal L-methionyl-L-phenylalanyl-[protein] + acetyl-CoA = N-terminal N(alpha)-acetyl-L-methionyl-L-phenylalanyl-[protein] + CoA + H(+). It carries out the reaction N-terminal L-methionyl-L-tryptophyl-[protein] + acetyl-CoA = N-terminal N(alpha)-acetyl-L-methionyl-L-tryptophyl-[protein] + CoA + H(+). It catalyses the reaction N-terminal L-methionyl-L-tyrosyl-[protein] + acetyl-CoA = N-terminal N(alpha)-acetyl-L-methionyl-L-tyrosyl-[protein] + CoA + H(+). Functionally, catalytic subunit of the N-terminal acetyltransferase C (NatC) complex. Catalyzes acetylation of the N-terminal methionine residues of peptides beginning with Met-Leu-Ala and Met-Leu-Gly. N-terminal acetylation protects proteins from ubiquitination and degradation by the N-end rule pathway. Necessary for the lysosomal localization and function of ARL8B sugeesting that ARL8B is a NatC substrate. This chain is N-alpha-acetyltransferase 30 (Naa30), found in Mus musculus (Mouse).